The chain runs to 343 residues: UDP-glucuronic acid decarboxylase 6 (343 aa).

The segment at 1 to 22 (MASNSSNGTTTTKPPPMPSPLR) is disordered. A2 bears the N-acetylalanine mark. NAD(+) is bound at residue 62-87 (DNYFTGSKDNLKKWIGHPRFELIRHD). R171 is a binding site for substrate. Y174 serves as the catalytic Proton acceptor. 174–178 (YDEGK) lines the NAD(+) pocket. Residue N203 participates in substrate binding. R215 is an NAD(+) binding site. Residues 216-220 (VVSNF), 233-240 (QKPGTQTR), and 300-304 (DPRQR) contribute to the substrate site.

Belongs to the NAD(P)-dependent epimerase/dehydratase family. UDP-glucuronic acid decarboxylase subfamily. Requires NAD(+) as cofactor.

The protein localises to the cytoplasm. The catalysed reaction is UDP-alpha-D-glucuronate + H(+) = UDP-alpha-D-xylose + CO2. Its pathway is nucleotide-sugar biosynthesis; UDP-alpha-D-xylose biosynthesis; UDP-alpha-D-xylose from UDP-alpha-D-glucuronate: step 1/1. Its function is as follows. Catalyzes the NAD-dependent decarboxylation of UDP-glucuronic acid to UDP-xylose. Necessary for the biosynthesis of the core tetrasaccharide in glycosaminoglycan biosynthesis. This Arabidopsis thaliana (Mouse-ear cress) protein is UDP-glucuronic acid decarboxylase 6 (UXS6).